Reading from the N-terminus, the 173-residue chain is Photosystem I assembly protein Ycf3 (173 aa).

TPR repeat units follow at residues 35–68 (AFVYYRDGMSAQAEGEYAEALEYYEEALTLEEDT), 72–105 (GYILYNMGLIYASNGDHDKALELYHQAIELNPRL), and 120–153 (GEKAKEDGDHDGGEALFDQAADYWIRAIRMAPNN).

This sequence belongs to the Ycf3 family.

Its subcellular location is the cellular thylakoid membrane. Essential for the assembly of the photosystem I (PSI) complex. May act as a chaperone-like factor to guide the assembly of the PSI subunits. The chain is Photosystem I assembly protein Ycf3 from Trichormus variabilis (strain ATCC 29413 / PCC 7937) (Anabaena variabilis).